Consider the following 861-residue polypeptide: Glucans biosynthesis glucosyltransferase H (861 aa).

A run of 6 helical transmembrane segments spans residues 142–162 (FILL…MKGI), 188–208 (VLPY…FCWV), 516–536 (VFLT…FLVL), 573–593 (LFST…MLIW), 600–620 (FGGV…SVLL), and 683–703 (FLWW…VSVI).

It belongs to the glycosyltransferase 2 family. OpgH subfamily.

It is found in the cell inner membrane. It participates in glycan metabolism; osmoregulated periplasmic glucan (OPG) biosynthesis. In terms of biological role, involved in the biosynthesis of osmoregulated periplasmic glucans (OPGs). In Pseudomonas aeruginosa (strain UCBPP-PA14), this protein is Glucans biosynthesis glucosyltransferase H.